Reading from the N-terminus, the 110-residue chain is U1-lycotoxin-Ls1kk (110 aa).

The N-terminal stretch at 1 to 20 (MKFVLLFGVFLVTLFSYSSA) is a signal peptide. The propeptide occupies 21 to 44 (EMLDDFDQADEDELLSLIEKEEAR). 4 cysteine pairs are disulfide-bonded: C47/C62, C54/C71, C61/C89, and C73/C87.

Belongs to the neurotoxin 19 (CSTX) family. 03 subfamily. As to expression, expressed by the venom gland.

It localises to the secreted. The polypeptide is U1-lycotoxin-Ls1kk (Lycosa singoriensis (Wolf spider)).